The primary structure comprises 1039 residues: Isoleucine--tRNA ligase (1039 aa).

Residues 46-56 carry the 'HIGH' region motif; it reads PYCSGAIHLGT. A 'KMSKS' region motif is present at residues 600–604; that stretch reads KMSKS. Residue Lys603 coordinates ATP.

It belongs to the class-I aminoacyl-tRNA synthetase family. IleS type 2 subfamily. In terms of assembly, monomer. Zn(2+) serves as cofactor.

It localises to the cytoplasm. It carries out the reaction tRNA(Ile) + L-isoleucine + ATP = L-isoleucyl-tRNA(Ile) + AMP + diphosphate. Functionally, catalyzes the attachment of isoleucine to tRNA(Ile). As IleRS can inadvertently accommodate and process structurally similar amino acids such as valine, to avoid such errors it has two additional distinct tRNA(Ile)-dependent editing activities. One activity is designated as 'pretransfer' editing and involves the hydrolysis of activated Val-AMP. The other activity is designated 'posttransfer' editing and involves deacylation of mischarged Val-tRNA(Ile). The sequence is that of Isoleucine--tRNA ligase from Methanocaldococcus jannaschii (strain ATCC 43067 / DSM 2661 / JAL-1 / JCM 10045 / NBRC 100440) (Methanococcus jannaschii).